The sequence spans 553 residues: CTP synthase (553 aa).

Residues 1–275 (MPTETEYDPS…DQYVMEQFDM (275 aa)) are amidoligase domain. S24 serves as a coordination point for CTP. S24 contacts UTP. Residue 25 to 30 (GLGKGI) coordinates ATP. Y65 contacts L-glutamine. D82 provides a ligand contact to ATP. 2 residues coordinate Mg(2+): D82 and E150. Residues 157–159 (DIE), 196–201 (KTKPTQ), and K232 each bind CTP. Residues 196-201 (KTKPTQ) and K232 contribute to the UTP site. Positions 308-540 (KYALEDAYMS…LDAVLERADV (233 aa)) constitute a Glutamine amidotransferase type-1 domain. G362 lines the L-glutamine pocket. Residue C389 is the Nucleophile; for glutamine hydrolysis of the active site. L-glutamine is bound by residues 390 to 393 (LGFQ), E413, and R470. Active-site residues include H513 and E515.

Belongs to the CTP synthase family. As to quaternary structure, homotetramer.

The catalysed reaction is UTP + L-glutamine + ATP + H2O = CTP + L-glutamate + ADP + phosphate + 2 H(+). The enzyme catalyses L-glutamine + H2O = L-glutamate + NH4(+). It catalyses the reaction UTP + NH4(+) + ATP = CTP + ADP + phosphate + 2 H(+). It functions in the pathway pyrimidine metabolism; CTP biosynthesis via de novo pathway; CTP from UDP: step 2/2. Allosterically activated by GTP, when glutamine is the substrate; GTP has no effect on the reaction when ammonia is the substrate. The allosteric effector GTP functions by stabilizing the protein conformation that binds the tetrahedral intermediate(s) formed during glutamine hydrolysis. Inhibited by the product CTP, via allosteric rather than competitive inhibition. Its function is as follows. Catalyzes the ATP-dependent amination of UTP to CTP with either L-glutamine or ammonia as the source of nitrogen. Regulates intracellular CTP levels through interactions with the four ribonucleotide triphosphates. The chain is CTP synthase from Halobacterium salinarum (strain ATCC 29341 / DSM 671 / R1).